Consider the following 526-residue polypeptide: Glutamate--tRNA ligase, mitochondrial (526 aa).

A mitochondrion-targeting transit peptide spans methionine 1–phenylalanine 38. Arginine 37–alanine 39 is a binding site for L-glutamate. Positions proline 42–serine 50 match the 'HIGH' region motif. ATP is bound at residue histidine 47. L-glutamate contacts are provided by residues glutamate 73, tyrosine 222–asparagine 226, and arginine 240. ATP contacts are provided by residues glutamate 243 and lysine 278–arginine 282. The 'KMSKS' region signature appears at lysine 278–arginine 282.

Belongs to the class-I aminoacyl-tRNA synthetase family. Glutamate--tRNA ligase type 1 subfamily.

The protein resides in the mitochondrion. It catalyses the reaction tRNA(Glu) + L-glutamate + ATP = L-glutamyl-tRNA(Glu) + AMP + diphosphate. Functionally, catalyzes the attachment of glutamate to tRNA(Glu) in a two-step reaction: glutamate is first activated by ATP to form Glu-AMP and then transferred to the acceptor end of tRNA(Glu). This is Glutamate--tRNA ligase, mitochondrial (mse1) from Schizosaccharomyces pombe (strain 972 / ATCC 24843) (Fission yeast).